Consider the following 733-residue polypeptide: Wall-associated receptor kinase 5 (733 aa).

The N-terminal stretch at 1–23 is a signal peptide; that stretch reads MKVHSLFLMAIFFYLAYTQLVKA. The Extracellular segment spans residues 24 to 330; it reads QPRDDCQTRC…IDTPKEEPKY (307 aa). N-linked (GlcNAc...) asparagine glycans are attached at residues N57, N77, N110, N137, N184, N206, N218, N232, and N247. In terms of domain architecture, EGF-like 1 spans 231–278; it reads GNQTCEQVVGRNICGGNSTCFDSTRGKGYNCKCLQGFDGNPYLSDGCQ. Cystine bridges form between C235–C250, C244–C261, C263–C277, C283–C296, C290–C305, and C307–C320. Residues 279–321 form the EGF-like 2; calcium-binding domain; it reads DINECTTRIHNCSDTSTCENTLGSFHCQCPSGSDLNTTTMSCI. The N-linked (GlcNAc...) asparagine glycan is linked to N289. The N-linked (GlcNAc...) asparagine glycan is linked to N314. A helical transmembrane segment spans residues 331–351; sequence LGWTTVLLGTTIGFLIILLTI. At 352-733 the chain is on the cytoplasmic side; that stretch reads SYIQQKMRHR…VTRLDIETGR (382 aa). T397 carries the post-translational modification Phosphothreonine. The 284-residue stretch at 408–691 folds into the Protein kinase domain; sequence YNESRILGQG…RVKTTKHQWS (284 aa). ATP contacts are provided by residues 414-422 and K436; that span reads LGQGGQGTV. Phosphotyrosine is present on Y481. D533 (proton acceptor) is an active-site residue. Phosphothreonine is present on residues T567 and T572. Y580 is modified (phosphotyrosine).

This sequence belongs to the protein kinase superfamily. Ser/Thr protein kinase family. Predominantly expressed in green tissues such as stems and leaves.

It localises to the membrane. The catalysed reaction is L-seryl-[protein] + ATP = O-phospho-L-seryl-[protein] + ADP + H(+). It catalyses the reaction L-threonyl-[protein] + ATP = O-phospho-L-threonyl-[protein] + ADP + H(+). Functionally, serine/threonine-protein kinase that may function as a signaling receptor of extracellular matrix component. Binding to pectin may have significance in the control of cell expansion, morphogenesis and development. This Arabidopsis thaliana (Mouse-ear cress) protein is Wall-associated receptor kinase 5 (WAK5).